Consider the following 842-residue polypeptide: MEFPTKYVYITSNLDKPKEWFTQSEMSLTTTTDTIQKSFVNNSGSSSSSKGFGEAVLLDILDTAGQEEYSAMRDQYVRTGDCFMIVFSIDSRSSFEEVSQLKQHIERVKDRDDVPIIIVGNKVDLESRRQVSRIEADQLARSLRVPYIETSAKTRSNIEEAFFTLVRHTPRNTVYKVVVMGGGGVGKSAIIIQFIQNHFVEEYDPTIEDSYRKQVTISGLPPIGGSLNKKSSSSSSSSSSSSGKTGLFNKIFSGKDKQPSPQQAASPSTIDRTGQISTNRLEANVLSYSMSNLSKEVPLITGDCVYCQGCNVILSRFSNLVKTGDDSFTWKCEFCKYSNSNILLEQGEIPNKDSVEYVLSSPSTSSTTDGSKREESIIIYCIDVSGSMGITTEVPSLQSEWVNAKKGVKGASSGPSYISRLECVQSSIPTMIDRLSIQYPNKRVVLVTFSDEVMIYTQSNSVDGPIVIAGDKLEDFDQLIEIGRSMTYDKLPTASGSSDFLKAKIKSLEPVQSTALGPALLVSAAIASQKMLSEVVICTDGVPNVGLGAIEDLPLGPAQEFYEKVTKLAQNNKTTINIIGISGSHIDLGVIGKVSEQTNGNITIIHPLELAREIRKLTQNPMIATDVEMSICLHPTLEINKYDSKQGLSRVVKQFPNVNSLTDLTLLYSSRNRPTEFVQIYPFQIQIKYTKLDGVRCLRVVSAQLQATPDFNTSTSNANISILAMAFTQQAAKIAQQQEYMESRLHLKAATKLIRSLCNTDEQWEEFYNFEVLREEMEAPLITCIKNKQQRVEKAATDDEIQVFYKMKNVHKSFVEGGRKKDISRRKGEAEINKQYYNIKFT.

GTP is bound by residues 62–66 (DTAGQ), 121–124 (NKVD), and 181–188 (GGGGVGKS). The tract at residues 253–274 (SGKDKQPSPQQAASPSTIDRTG) is disordered. The span at 259–274 (PSPQQAASPSTIDRTG) shows a compositional bias: polar residues. Residues 377 to 627 (IIIYCIDVSG…TQNPMIATDV (251 aa)) form the VWFA domain.

It belongs to the small GTPase superfamily. CpRas family.

The chain is Circularly permutated Ras protein 1 (cpras1) from Dictyostelium discoideum (Social amoeba).